Consider the following 155-residue polypeptide: Putative pre-16S rRNA nuclease (155 aa).

This sequence belongs to the YqgF nuclease family.

Its subcellular location is the cytoplasm. Could be a nuclease involved in processing of the 5'-end of pre-16S rRNA. The protein is Putative pre-16S rRNA nuclease of Xanthomonas campestris pv. campestris (strain 8004).